Reading from the N-terminus, the 215-residue chain is Thiamine-phosphate synthase (215 aa).

4-amino-2-methyl-5-(diphosphooxymethyl)pyrimidine contacts are provided by residues 43-47 (QLRDK) and N75. Mg(2+)-binding residues include D76 and D95. Residue S114 participates in 4-amino-2-methyl-5-(diphosphooxymethyl)pyrimidine binding. Residue 141 to 143 (TPT) coordinates 2-[(2R,5Z)-2-carboxy-4-methylthiazol-5(2H)-ylidene]ethyl phosphate. A 4-amino-2-methyl-5-(diphosphooxymethyl)pyrimidine-binding site is contributed by K144. Residue G172 participates in 2-[(2R,5Z)-2-carboxy-4-methylthiazol-5(2H)-ylidene]ethyl phosphate binding.

This sequence belongs to the thiamine-phosphate synthase family. Mg(2+) serves as cofactor.

The enzyme catalyses 2-[(2R,5Z)-2-carboxy-4-methylthiazol-5(2H)-ylidene]ethyl phosphate + 4-amino-2-methyl-5-(diphosphooxymethyl)pyrimidine + 2 H(+) = thiamine phosphate + CO2 + diphosphate. It catalyses the reaction 2-(2-carboxy-4-methylthiazol-5-yl)ethyl phosphate + 4-amino-2-methyl-5-(diphosphooxymethyl)pyrimidine + 2 H(+) = thiamine phosphate + CO2 + diphosphate. The catalysed reaction is 4-methyl-5-(2-phosphooxyethyl)-thiazole + 4-amino-2-methyl-5-(diphosphooxymethyl)pyrimidine + H(+) = thiamine phosphate + diphosphate. It participates in cofactor biosynthesis; thiamine diphosphate biosynthesis; thiamine phosphate from 4-amino-2-methyl-5-diphosphomethylpyrimidine and 4-methyl-5-(2-phosphoethyl)-thiazole: step 1/1. Functionally, condenses 4-methyl-5-(beta-hydroxyethyl)thiazole monophosphate (THZ-P) and 2-methyl-4-amino-5-hydroxymethyl pyrimidine pyrophosphate (HMP-PP) to form thiamine monophosphate (TMP). This Streptomyces avermitilis (strain ATCC 31267 / DSM 46492 / JCM 5070 / NBRC 14893 / NCIMB 12804 / NRRL 8165 / MA-4680) protein is Thiamine-phosphate synthase.